The primary structure comprises 92 residues: Muscle LIM protein 1 (92 aa).

The LIM zinc-binding domain occupies 11–62 (CPACGKSVYAAEERVAGGYKFHKTCFKCSMCNKALDSTNCTEHEKELFCKNC). The Nuclear localization signal motif lies at 65–70 (RKYGPK).

In the embryo, expression is restricted to the somatic, visceral, and pharyngeal muscles. Within the somatic musculature, MLP60 is distributed throughout the muscle fibers. There is no expression in cardiac mesoderm or in fat body.

The protein resides in the cytoplasm. It is found in the nucleus. In terms of biological role, positive regulator of myogenesis. The protein is Muscle LIM protein 1 (Mlp60A) of Drosophila melanogaster (Fruit fly).